The following is an 85-amino-acid chain: ATP synthase subunit c (85 aa).

2 consecutive transmembrane segments (helical) span residues 10-30 (IAVGIIVGLASLGTAIGFALL) and 53-73 (FIIAGLLDAVPMIGIVIALLF).

It belongs to the ATPase C chain family. As to quaternary structure, F-type ATPases have 2 components, F(1) - the catalytic core - and F(0) - the membrane proton channel. F(1) has five subunits: alpha(3), beta(3), gamma(1), delta(1), epsilon(1). F(0) has three main subunits: a(1), b(2) and c(10-14). The alpha and beta chains form an alternating ring which encloses part of the gamma chain. F(1) is attached to F(0) by a central stalk formed by the gamma and epsilon chains, while a peripheral stalk is formed by the delta and b chains.

Its subcellular location is the cell inner membrane. Its function is as follows. F(1)F(0) ATP synthase produces ATP from ADP in the presence of a proton or sodium gradient. F-type ATPases consist of two structural domains, F(1) containing the extramembraneous catalytic core and F(0) containing the membrane proton channel, linked together by a central stalk and a peripheral stalk. During catalysis, ATP synthesis in the catalytic domain of F(1) is coupled via a rotary mechanism of the central stalk subunits to proton translocation. Functionally, key component of the F(0) channel; it plays a direct role in translocation across the membrane. A homomeric c-ring of between 10-14 subunits forms the central stalk rotor element with the F(1) delta and epsilon subunits. This is ATP synthase subunit c from Aliivibrio fischeri (strain ATCC 700601 / ES114) (Vibrio fischeri).